Consider the following 110-residue polypeptide: Body wall hemoglobin (110 aa).

Residues 2 to 110 form the Globin domain; the sequence is VNWAAVVDAF…GAVDAIISHF (109 aa). Position 70 (His70) interacts with heme.

Belongs to the globin family. Homotetramer.

The chain is Body wall hemoglobin from Cerebratulus lacteus (Milky ribbon worm).